The chain runs to 299 residues: Mimecan (299 aa).

Positions 1-19 (MKTLQSTLLLFLFVPLIKP) are cleaved as a signal peptide. An N-linked (GlcNAc...) (keratan sulfate) asparagine glycan is attached at Asn89. LRR repeat units lie at residues 113–132 (DAVP…FNKI), 133–156 (KKLT…GNLI), 157–180 (EDIE…ENQL), 181–200 (LKLP…YNKI), 201–226 (KSRG…HNAL), 227–247 (ESVP…FNNI), and 248–278 (TSIT…GNPV). Residue Asn215 is glycosylated (N-linked (GlcNAc...) (keratan sulfate) asparagine). Asn246 carries N-linked (GlcNAc...) asparagine glycosylation. Cys256 and Cys289 are disulfide-bonded. Asn259 carries N-linked (GlcNAc...) (keratan sulfate) asparagine glycosylation.

It belongs to the small leucine-rich proteoglycan (SLRP) family. SLRP class III subfamily. In terms of processing, contains keratan sulfate. Keratan sulfate attachment is observed in the cornea but the protein also exists in other tissues without keratan sulfate. The 12 kDa OIF in bone and the 25 kDa KSPG25 protein in cornea are probably proteolytic fragments. In terms of tissue distribution, bone and cornea.

The protein localises to the secreted. The protein resides in the extracellular space. It localises to the extracellular matrix. Functionally, induces bone formation in conjunction with TGF-beta-1 or TGF-beta-2. The chain is Mimecan (OGN) from Bos taurus (Bovine).